Here is a 198-residue protein sequence, read N- to C-terminus: Putative endonuclease segC (198 aa).

In terms of domain architecture, GIY-YIG spans 7–90 (KYFYLYSITN…FVKSKKTYNM (84 aa)).

The protein to endonucleases of group I introns of fungi and phage. It depends on Mg(2+) as a cofactor.

Probably involved in the movement of the endonuclease-encoding DNA. The chain is Putative endonuclease segC (segC) from Escherichia coli (Bacteriophage T4).